A 232-amino-acid polypeptide reads, in one-letter code: Rhamnogalacturonan acetylesterase RhgT (232 aa).

The active-site Nucleophile is Ser-14. Catalysis depends on residues Glu-191 and His-195.

This sequence belongs to the 'GDSL' lipolytic enzyme family. In terms of assembly, monomer.

With respect to regulation, almost completely inhibited by diethylpyrocarbonate at 5 mM and completely inhibited by phenylmethylsulfonyl fluoride (PMSF) at 50 mM. Dimethyl phosphite achieves only a 53% inhibition. Also inhibited by metal ions (magnesium, manganese and calcium) and chelating agent (EDTA) at the same level. In terms of biological role, may play a role in the degradation of type I rhamnogalacturonan derived from plant cell walls. This enzyme has a broad substrate specificity, and shows strong preference for glucose pentaacetate, beta-naphthylacetate, and p-nitrophenyl acetate (pNPA). Also active toward acetylated xylan. In Bacillus subtilis (strain 168), this protein is Rhamnogalacturonan acetylesterase RhgT (rhgT).